The sequence spans 239 residues: DNA repair protein RecO (239 aa).

The protein belongs to the RecO family.

In terms of biological role, involved in DNA repair and RecF pathway recombination. This Stenotrophomonas maltophilia (strain K279a) protein is DNA repair protein RecO.